A 324-amino-acid chain; its full sequence is Arginase (324 aa).

Mn(2+) contacts are provided by H115, D142, H144, and D146. Residues 144 to 148 (HTDLH), 155 to 157 (SGN), and D196 contribute to the substrate site. Mn(2+) contacts are provided by D244 and D246. Residues T258 and E289 each contribute to the substrate site.

It belongs to the arginase family. Homohexamer. It depends on Mn(2+) as a cofactor.

The catalysed reaction is L-arginine + H2O = urea + L-ornithine. Its pathway is nitrogen metabolism; urea cycle; L-ornithine and urea from L-arginine: step 1/1. This Agrobacterium fabrum (strain C58 / ATCC 33970) (Agrobacterium tumefaciens (strain C58)) protein is Arginase (arcA).